The sequence spans 272 residues: MTVSAALQQSADEAGLLPSHQARLDYRTGKGWSTAGVANGFVQGNLAIIPERYAGAFHRFCQLNPKPCPIIGMSDPGNPHIPALGADLDIRTDVPRYRVWRDGEMVEEPTDLLAHWRDDLVTFVLGCSFSFEEALMADGLPIRHIEQGCRVPMYRTNIACTPSGQFAGPMVVSMRPFKPAQAIRAVQITTRFPAVHGAPVHLGLPEQIGIADINTPDYGDPVPVGTDEIPVFWACGVTPQAVIAAAKLPFAITHAPGLMLITDLRNKDLAVL.

This sequence belongs to the D-glutamate cyclase family.

The chain is Putative hydro-lyase BRADO2538 from Bradyrhizobium sp. (strain ORS 278).